An 823-amino-acid chain; its full sequence is DNA ligase (823 aa).

Residues 32–36 (DAEYD), 81–82 (SL), and glutamate 121 contribute to the NAD(+) site. Lysine 123 (N6-AMP-lysine intermediate) is an active-site residue. The NAD(+) site is built by arginine 144, glutamate 181, lysine 299, and lysine 323. Residues cysteine 449, cysteine 452, cysteine 467, and cysteine 473 each coordinate Zn(2+). The disordered stretch occupies residues 528 to 558 (ETADKGSSENENGDAETVSGDLSKYNTQNGK). A BRCT domain is found at 746–823 (GINKAVAGKT…SEAELLTLLC (78 aa)).

This sequence belongs to the NAD-dependent DNA ligase family. LigA subfamily. Mg(2+) is required as a cofactor. The cofactor is Mn(2+).

The enzyme catalyses NAD(+) + (deoxyribonucleotide)n-3'-hydroxyl + 5'-phospho-(deoxyribonucleotide)m = (deoxyribonucleotide)n+m + AMP + beta-nicotinamide D-nucleotide.. Functionally, DNA ligase that catalyzes the formation of phosphodiester linkages between 5'-phosphoryl and 3'-hydroxyl groups in double-stranded DNA using NAD as a coenzyme and as the energy source for the reaction. It is essential for DNA replication and repair of damaged DNA. In Neisseria gonorrhoeae (strain NCCP11945), this protein is DNA ligase.